The primary structure comprises 149 residues: Arginine repressor (149 aa).

Belongs to the ArgR family.

The protein resides in the cytoplasm. It participates in amino-acid biosynthesis; L-arginine biosynthesis [regulation]. Its function is as follows. Regulates arginine biosynthesis genes. In Listeria welshimeri serovar 6b (strain ATCC 35897 / DSM 20650 / CCUG 15529 / CIP 8149 / NCTC 11857 / SLCC 5334 / V8), this protein is Arginine repressor.